The following is a 231-amino-acid chain: Ribonuclease 3 (231 aa).

The RNase III domain maps to 5-134; it reads QKKLKNDYGL…FLGALFIDQG (130 aa). Glu47 is a binding site for Mg(2+). The active site involves Asp51. Mg(2+)-binding residues include Asn120 and Glu123. Glu123 is an active-site residue. Residues 160–229 form the DRBM domain; sequence DYKTELQEVL…AENAIKGQNH (70 aa).

It belongs to the ribonuclease III family. As to quaternary structure, homodimer. Requires Mg(2+) as cofactor.

It is found in the cytoplasm. It carries out the reaction Endonucleolytic cleavage to 5'-phosphomonoester.. Functionally, digests double-stranded RNA. Involved in the processing of primary rRNA transcript to yield the immediate precursors to the large and small rRNAs (23S and 16S). Processes some mRNAs, and tRNAs when they are encoded in the rRNA operon. Processes pre-crRNA and tracrRNA of type II CRISPR loci if present in the organism. This chain is Ribonuclease 3, found in Lactococcus lactis subsp. cremoris (strain MG1363).